The following is a 481-amino-acid chain: 7-deoxyloganetin glucosyltransferase (481 aa).

His-22 functions as the Proton acceptor in the catalytic mechanism. An an anthocyanidin-binding site is contributed by His-22. Asp-126 (charge relay) is an active-site residue. UDP-alpha-D-glucose contacts are provided by Thr-148, Gln-363, His-378, Trp-381, Asn-382, Ser-383, and Glu-386. An anthocyanidin is bound at residue Ala-401. UDP-alpha-D-glucose contacts are provided by Glu-402 and Gln-403.

This sequence belongs to the UDP-glycosyltransferase family. Ubiquitous. Very low expression in stems.

The catalysed reaction is 7-deoxyloganetin + UDP-alpha-D-glucose = 7-deoxyloganin + UDP + H(+). Functionally, iridoid glucosyltransferase acting on genipin and 7-deoxyloganetin. No activity with 7-deoxyloganetic acid. Involved in geniposide biosynthesis. The chain is 7-deoxyloganetin glucosyltransferase (UGT85A24) from Gardenia jasminoides (Cape jasmine).